The primary structure comprises 213 residues: Uridine kinase (213 aa).

15–22 contributes to the ATP binding site; it reads GASASGKS.

Belongs to the uridine kinase family.

The protein resides in the cytoplasm. It catalyses the reaction uridine + ATP = UMP + ADP + H(+). It carries out the reaction cytidine + ATP = CMP + ADP + H(+). The protein operates within pyrimidine metabolism; CTP biosynthesis via salvage pathway; CTP from cytidine: step 1/3. It participates in pyrimidine metabolism; UMP biosynthesis via salvage pathway; UMP from uridine: step 1/1. This Sodalis glossinidius (strain morsitans) protein is Uridine kinase.